Here is a 209-residue protein sequence, read N- to C-terminus: Response regulator protein VraR (209 aa).

The region spanning 4 to 120 is the Response regulatory domain; the sequence is KVLFVDDHEM…DIADAVRKTS (117 aa). A 4-aspartylphosphate modification is found at Asp55. The HTH luxR-type domain occupies 141–206; it reads RAELYEMLTE…QAVIYAFQHN (66 aa). Residues 165 to 184 constitute a DNA-binding region (H-T-H motif); it reads NQEIASASHITIKTVKTHVS.

As to quaternary structure, homodimer. Phosphorylated by VraS. Phosphorylation state of VraR controls dimerization of the protein.

Member of the two-component regulatory system VraS/VraR involved in the control of the cell wall peptidoglycan biosynthesis. Upon cellular stress, the histidine kinase VraS transfers the phosphoryl group onto VraR. Upon phosphorylation, VraR dimerizes at the N-terminal domain. In turn, phosphorylation-induced dimerization expand and enhance the VraR binding to its own promoter leading to increased expression and subsequent modulation of as many as 40 genes, which ultimately constitute the S.aureus response to cell wall damage. In addition, inhibits the host autophagic flux and delays the early stage of autophagosome formation, thereby promoting bacterial survival. Facilitates the ability of S.aureus to resist host polymorphonuclear leukocytes-mediated phagocytosis and killing thus contributing to immune evasion. The chain is Response regulator protein VraR (vraR) from Staphylococcus aureus (strain NCTC 8325 / PS 47).